The chain runs to 86 residues: Small ribosomal subunit protein uS17 (86 aa).

This sequence belongs to the universal ribosomal protein uS17 family. As to quaternary structure, part of the 30S ribosomal subunit.

Functionally, one of the primary rRNA binding proteins, it binds specifically to the 5'-end of 16S ribosomal RNA. The polypeptide is Small ribosomal subunit protein uS17 (Rhizorhabdus wittichii (strain DSM 6014 / CCUG 31198 / JCM 15750 / NBRC 105917 / EY 4224 / RW1) (Sphingomonas wittichii)).